The sequence spans 158 residues: 3-dehydroquinate dehydratase (158 aa).

Y22 functions as the Proton acceptor in the catalytic mechanism. Positions 74, 80, and 87 each coordinate substrate. The active-site Proton donor is H100. Substrate-binding positions include 101-102 (IS) and R111.

It belongs to the type-II 3-dehydroquinase family. Homododecamer.

It catalyses the reaction 3-dehydroquinate = 3-dehydroshikimate + H2O. Its pathway is metabolic intermediate biosynthesis; chorismate biosynthesis; chorismate from D-erythrose 4-phosphate and phosphoenolpyruvate: step 3/7. Its function is as follows. Catalyzes a trans-dehydration via an enolate intermediate. The chain is 3-dehydroquinate dehydratase from Helicobacter hepaticus (strain ATCC 51449 / 3B1).